We begin with the raw amino-acid sequence, 131 residues long: Cuticle protein 79, isoform A (131 aa).

Tandem repeats lie at residues 37-40 (AAPA), 45-48 (AAPA), and 53-56 (AAPA).

In terms of biological role, component of the cuticle of migratory locust which contains more than 100 different structural proteins. The polypeptide is Cuticle protein 79, isoform A (Locusta migratoria (Migratory locust)).